The sequence spans 205 residues: dITP/XTP pyrophosphatase (205 aa).

8 to 13 (SGNKGK) is a substrate binding site. The active-site Proton acceptor is the Asp-69. Position 69 (Asp-69) interacts with Mg(2+). Residues Ser-70, 153–156 (HGYD), Lys-176, and 181–182 (HR) each bind substrate.

The protein belongs to the HAM1 NTPase family. As to quaternary structure, homodimer. It depends on Mg(2+) as a cofactor.

It catalyses the reaction XTP + H2O = XMP + diphosphate + H(+). The catalysed reaction is dITP + H2O = dIMP + diphosphate + H(+). It carries out the reaction ITP + H2O = IMP + diphosphate + H(+). In terms of biological role, pyrophosphatase that catalyzes the hydrolysis of nucleoside triphosphates to their monophosphate derivatives, with a high preference for the non-canonical purine nucleotides XTP (xanthosine triphosphate), dITP (deoxyinosine triphosphate) and ITP. Seems to function as a house-cleaning enzyme that removes non-canonical purine nucleotides from the nucleotide pool, thus preventing their incorporation into DNA/RNA and avoiding chromosomal lesions. The sequence is that of dITP/XTP pyrophosphatase from Shewanella oneidensis (strain ATCC 700550 / JCM 31522 / CIP 106686 / LMG 19005 / NCIMB 14063 / MR-1).